The following is a 164-amino-acid chain: Decoration protein (164 aa).

A binding to the capsid hexamer region spans residues 1–72 (MIDYSGLRTI…AIPPAPPAPP (72 aa)). One can recognise an Ig-like domain in the interval 71-164 (PPLTLSKDLT…VTVNPTVPGG (94 aa)).

Interacts with the major capsid protein; each hexon binds a single copy of the decoration protein.

The protein localises to the virion. Functionally, decoration protein that binds asymmetrically to the center of each capsid protein hexamer after capsid expansion. Stabilizes the capsid and protects from DNA release. The sequence is that of Decoration protein from Escherichia phage T5 (Enterobacteria phage T5).